The sequence spans 501 residues: Mitogen-activated protein kinase 16 (501 aa).

Residues 22–313 (YEVTEVVGKG…AAEALTDPYF (292 aa)) form the Protein kinase domain. ATP is bound by residues 28-36 (VGKGSYGVV) and Lys51. Catalysis depends on Asp148, which acts as the Proton acceptor. The residue at position 184 (Thr184) is a Phosphothreonine. Residues 184 to 186 (TDY) carry the TXY motif. Tyr186 carries the post-translational modification Phosphotyrosine. The segment at 477–501 (DEESMSEYMNEAADGVPHKIAQLKT) is disordered.

It belongs to the protein kinase superfamily. CMGC Ser/Thr protein kinase family. MAP kinase subfamily. Post-translationally, dually phosphorylated on Thr-184 and Tyr-186, which activates the enzyme.

The enzyme catalyses L-seryl-[protein] + ATP = O-phospho-L-seryl-[protein] + ADP + H(+). It carries out the reaction L-threonyl-[protein] + ATP = O-phospho-L-threonyl-[protein] + ADP + H(+). Activated by threonine and tyrosine phosphorylation. The polypeptide is Mitogen-activated protein kinase 16 (MPK16) (Oryza sativa subsp. japonica (Rice)).